The primary structure comprises 207 residues: Outer-membrane lipoprotein carrier protein (207 aa).

Residues 1 to 22 (MKLSEKFCVFLFFLLFTSTTHA) form the signal peptide.

This sequence belongs to the LolA family. Monomer.

The protein localises to the periplasm. Functionally, participates in the translocation of lipoproteins from the inner membrane to the outer membrane. Only forms a complex with a lipoprotein if the residue after the N-terminal Cys is not an aspartate (The Asp acts as a targeting signal to indicate that the lipoprotein should stay in the inner membrane). This chain is Outer-membrane lipoprotein carrier protein, found in Nitrosospira multiformis (strain ATCC 25196 / NCIMB 11849 / C 71).